The chain runs to 372 residues: N-methyl-L-tryptophan oxidase (372 aa).

4–34 (DLIIIGSGSVGAAAGYYATRAGLKVLMTDAH) contributes to the FAD binding site. Cys-307 carries the post-translational modification S-8alpha-FAD cysteine.

Belongs to the MSOX/MTOX family. MTOX subfamily. As to quaternary structure, monomer. It depends on FAD as a cofactor.

The catalysed reaction is N(alpha)-methyl-L-tryptophan + O2 + H2O = L-tryptophan + formaldehyde + H2O2. Catalyzes the oxidative demethylation of N-methyl-L-tryptophan. The chain is N-methyl-L-tryptophan oxidase from Salmonella newport (strain SL254).